A 91-amino-acid chain; its full sequence is Acylphosphatase (91 aa).

An Acylphosphatase-like domain is found at 6-91 (CMRCYISGRV…WEDYISFDVL (86 aa)). Residues Arg-21 and Asn-39 contribute to the active site.

This sequence belongs to the acylphosphatase family.

The enzyme catalyses an acyl phosphate + H2O = a carboxylate + phosphate + H(+). This is Acylphosphatase (acyP) from Legionella pneumophila (strain Corby).